Consider the following 262-residue polypeptide: Acyl-[acyl-carrier-protein]--UDP-N-acetylglucosamine O-acyltransferase (262 aa).

Belongs to the transferase hexapeptide repeat family. LpxA subfamily. As to quaternary structure, homotrimer.

It is found in the cytoplasm. The catalysed reaction is a (3R)-hydroxyacyl-[ACP] + UDP-N-acetyl-alpha-D-glucosamine = a UDP-3-O-[(3R)-3-hydroxyacyl]-N-acetyl-alpha-D-glucosamine + holo-[ACP]. The protein operates within glycolipid biosynthesis; lipid IV(A) biosynthesis; lipid IV(A) from (3R)-3-hydroxytetradecanoyl-[acyl-carrier-protein] and UDP-N-acetyl-alpha-D-glucosamine: step 1/6. In terms of biological role, involved in the biosynthesis of lipid A, a phosphorylated glycolipid that anchors the lipopolysaccharide to the outer membrane of the cell. The chain is Acyl-[acyl-carrier-protein]--UDP-N-acetylglucosamine O-acyltransferase from Yersinia pseudotuberculosis serotype O:1b (strain IP 31758).